The chain runs to 354 residues: MSSAIVVSQDAESLGLQIYSRKEKSLGVLVSNFLRLYNRDDVDLIGLDDAAGQLGVERRRIYDVVNILESIGIVARRGKNQYSWKGFGEIPRSLDELKEEGMRERLGYSSSNNSDKVSNGCEREEPLTLTPDDQENSSSSKMDQKKEKSLWLLAQNFVKMFLCSDDDLITLDSAAKALLSDSPDSVHMRTKVRRLYDIANVFASMNLIEKTHIPVTRKPAYRWLGSKSIAERGLSLFNSGEPKRVFGTEITNLRAKRNKTYCSSIRKQIGYKKHDEENTEQESKPAASKYVFGPFSPIGASKTNNDKVGKGRLLEIEALASTYQPQYCNQEITGLLGHFTEAWKKWYAEVDRNK.

Residues 21–86 (RKEKSLGVLV…RGKNQYSWKG (66 aa)) mediate DNA binding. The segment at 104-143 (ERLGYSSSNNSDKVSNGCEREEPLTLTPDDQENSSSSKMD) is disordered. Over residues 108–117 (YSSSNNSDKV) the composition is skewed to polar residues. Residues 145 to 225 (KKEKSLWLLA…TRKPAYRWLG (81 aa)) mediate DNA binding.

Belongs to the E2F/DP family. As to expression, high expression in young cotyledons and leaves, hypocotyls, shoot apical meristem, roots and mature pollen grains, moderate in developing trichomes, flowers and at early stages of developing anthers, and barely detectable in mature leaves. Not detected in primary root meristem, emerging lateral roots, pistils, developing embryos and siliques.

It localises to the nucleus. The protein resides in the cytoplasm. Functionally, inhibitor of E2F-dependent activation of gene expression. Binds specifically the E2 recognition site without interacting with DP proteins and prevents transcription activation by E2F/DP heterodimers. Does not bind retinoblastoma-related proteins. Acts as a growth regulator but is not associated with changes in the expression of cell cycle marker genes or in nuclear ploidy levels. Has no effect on cell proliferation, but may repress cell wall biosynthesis genes during cell elongation in differentiated cells. This is E2F transcription factor-like E2FF (E2FF) from Arabidopsis thaliana (Mouse-ear cress).